The sequence spans 346 residues: KH domain-containing, RNA-binding, signal transduction-associated protein 3 (346 aa).

The segment at 1 to 160 (MEEKYLPELM…IKKFLIPDYN (160 aa)) is involved in homodimerization. Residue Lys-4 forms a Glycyl lysine isopeptide (Lys-Gly) (interchain with G-Cter in SUMO2) linkage. Residues 61–127 (LIPVKQFPKF…AKYFHLNDDL (67 aa)) enclose the KH domain. Disordered regions lie at residues 212–266 (RPVA…QETY) and 317–346 (GQEEWTNSRHKAPSARTAKGVYRDQPYGRY). A compositionally biased stretch (pro residues) spans 253–262 (GYRPPPPPPT).

Belongs to the KHDRBS family. As to quaternary structure, self-associates to form homooligomers; dimerization increases RNA affinity. Interacts with KHDRBS2/SLM-1. Interacts with KHDRBS1/SAM68; heterooligomer formation of KHDRBS family proteins may modulate RNA substrate specificity. Interacts with the splicing regulatory proteins SFRS9, SAFB and YTHDC1. Interacts with HNRPL, RBMX, p85 subunit of PI3-kinase, SERPINB5. In terms of processing, phosphorylated on tyrosine residues by PTK6. In terms of tissue distribution, highly expressed in testis and brain. In adult cerebellum expressed predominantly in internal granular layer interneurons and in hippocampus is exclusively expressed in CA neurons; expression is restricted to neuronal subpopulations largely non-overlapping with expression of KHDRBS2/SLM-1.

The protein resides in the nucleus. In terms of biological role, RNA-binding protein that plays a role in the regulation of alternative splicing and influences mRNA splice site selection and exon inclusion. Binds preferentially to the 5'-[AU]UAAA-3' motif in vitro. Binds optimally to RNA containing 5'-[AU]UAA-3' as a bipartite motif spaced by more than 15 nucleotides. Binds poly(A). RNA-binding abilities are down-regulated by tyrosine kinase PTK6. Involved in splice site selection of vascular endothelial growth factor. In vitro regulates CD44 alternative splicing by direct binding to purine-rich exonic enhancer. Can regulate alternative splicing of neurexins NRXN1-3 in the laminin G-like domain 6 containing the evolutionary conserved neurexin alternative spliced segment 4 (AS4) involved in neurexin selective targeting to postsynaptic partners such as neuroligins and LRRTM family members. High concentrations in forebrain structures block splicing inclusion of NRXN1-3 AS4 exons while low concentrations favor their inclusion. Targeted, cell-type specific splicing regulation of NRXN1 at AS4 is involved in neuronal glutamatergic synapse function and plasticity and is linked to behavioral aspects. Regulates expression of KHDRBS2/SLIM-1 in defined neuron populations in the hippocampus by modifying its alternative splicing resulting in a transcript predicted to undergo nonsense-mediated decay. Can bind FABP9 mRNA. May play a role as a negative regulator of cell growth. Inhibits cell proliferation. This chain is KH domain-containing, RNA-binding, signal transduction-associated protein 3 (Khdrbs3), found in Mus musculus (Mouse).